We begin with the raw amino-acid sequence, 565 residues long: Probable beta-glucosidase btgE (565 aa).

A signal peptide spans 1–18; that stretch reads MRGAILATAAALAGTAMA. A disordered region spans residues 246-304; the sequence is TGQDEPTSAPAAPSTTAVPATTTAAPETTTAAPDTTTAVPSTSSAAPSSSSTAPASTGA. The segment covering 251-304 has biased composition (low complexity); it reads PTSAPAAPSTTAVPATTTAAPETTTAAPDTTTAVPSTSSAAPSSSSTAPASTGA. Glu-405 functions as the Proton donor in the catalytic mechanism. Glu-501 acts as the Nucleophile in catalysis.

The protein belongs to the glycosyl hydrolase 17 family.

The protein localises to the secreted. It localises to the cell wall. It carries out the reaction Hydrolysis of terminal, non-reducing beta-D-glucosyl residues with release of beta-D-glucose.. The protein operates within glycan metabolism; cellulose degradation. In terms of biological role, beta-glucosidases are one of a number of cellulolytic enzymes involved in the degradation of cellulosic biomass. Catalyzes the last step releasing glucose from the inhibitory cellobiose. The chain is Probable beta-glucosidase btgE (btgE) from Aspergillus fumigatus (strain CBS 144.89 / FGSC A1163 / CEA10) (Neosartorya fumigata).